A 315-amino-acid chain; its full sequence is Putative 2-hydroxyacid dehydrogenase HI_1556 (315 aa).

NAD(+) is bound by residues Thr73, 156–157, 231–233, and Asp257; these read CL and TGR. Arg233 is a catalytic residue. The active site involves Glu262. The active-site Proton donor is His285. 285–288 provides a ligand contact to NAD(+); it reads HIAW.

It belongs to the D-isomer specific 2-hydroxyacid dehydrogenase family.

The polypeptide is Putative 2-hydroxyacid dehydrogenase HI_1556 (Haemophilus influenzae (strain ATCC 51907 / DSM 11121 / KW20 / Rd)).